Here is a 72-residue protein sequence, read N- to C-terminus: Palustrin-2CG1 (72 aa).

The signal sequence occupies residues 1–22 (MFTMKKPLLLLFFLGTISLSLC). A propeptide spans 23–39 (QEERGADEDDGEMTEEV) (removed in mature form). The cysteines at positions 64 and 70 are disulfide-linked.

As to expression, expressed by the skin glands.

Its subcellular location is the secreted. Functionally, antimicrobial peptide active against a variety of Gram-positive and some Gram-negative bacterial strains. Has antifungal activity against a slime mold isolate. Has hemolytic activity against human erythrocytes. The polypeptide is Palustrin-2CG1 (Amolops chunganensis (Chungan torrent frog)).